The chain runs to 116 residues: MISKANKNATRKKRHGRVRRTIIGTAARPRLNVFRSNKNIYVQVIDDATHATLASASSLDLEKGNTTDAASAVGKLAAERALEKGIETVVFDRGGYLYHGRIKAVAEAAREAGLKF.

The protein belongs to the universal ribosomal protein uL18 family. In terms of assembly, part of the 50S ribosomal subunit; part of the 5S rRNA/L5/L18/L25 subcomplex. Contacts the 5S and 23S rRNAs.

Functionally, this is one of the proteins that bind and probably mediate the attachment of the 5S RNA into the large ribosomal subunit, where it forms part of the central protuberance. This Exiguobacterium sibiricum (strain DSM 17290 / CCUG 55495 / CIP 109462 / JCM 13490 / 255-15) protein is Large ribosomal subunit protein uL18.